The primary structure comprises 354 residues: Protein-glutamate methylesterase/protein-glutamine glutaminase (354 aa).

The Response regulatory domain occupies Lys7–Met124. A 4-aspartylphosphate modification is found at Asp58. Residues Leu156–Ser348 enclose the CheB-type methylesterase domain. Residues Ser168, His194, and Asp290 contribute to the active site.

It belongs to the CheB family. In terms of processing, phosphorylated by CheA. Phosphorylation of the N-terminal regulatory domain activates the methylesterase activity.

Its subcellular location is the cytoplasm. It carries out the reaction [protein]-L-glutamate 5-O-methyl ester + H2O = L-glutamyl-[protein] + methanol + H(+). It catalyses the reaction L-glutaminyl-[protein] + H2O = L-glutamyl-[protein] + NH4(+). Its function is as follows. Involved in chemotaxis. Part of a chemotaxis signal transduction system that modulates chemotaxis in response to various stimuli. Catalyzes the demethylation of specific methylglutamate residues introduced into the chemoreceptors (methyl-accepting chemotaxis proteins or MCP) by CheR. Also mediates the irreversible deamidation of specific glutamine residues to glutamic acid. In Chromohalobacter salexigens (strain ATCC BAA-138 / DSM 3043 / CIP 106854 / NCIMB 13768 / 1H11), this protein is Protein-glutamate methylesterase/protein-glutamine glutaminase.